The chain runs to 787 residues: Pleckstrin homology domain-containing family G member 6 (787 aa).

Residues 161–353 (HQQEALWELL…ESFLRHINGQ (193 aa)) enclose the DH domain. Residues 409–509 (QLLLEGPVRV…WLEKTQHAQT (101 aa)) form the PH domain. Positions 533–762 (QGTESPSTRP…EPGNGKPRRL (230 aa)) are disordered. Low complexity predominate over residues 535-557 (TESPSTRPSTPSPSPEDSQSSAE). The segment covering 724-742 (LRPRSLREDMLREIREELA) has biased composition (basic and acidic residues).

In terms of assembly, interacts with MYH10. Interacts with ELMO1 and EZR (in an open conformation). Interacts with CSPP1.

The protein resides in the cell projection. Its subcellular location is the microvillus. It localises to the cytoplasm. The protein localises to the cytoskeleton. It is found in the spindle. The protein resides in the cleavage furrow. Its function is as follows. Guanine nucleotide exchange factor activating the small GTPase RHOA, which, in turn, induces myosin filament formation. Also activates RHOG. Does not activate RAC1, or to a much lower extent than RHOA and RHOG. Part of a functional unit, involving PLEKHG6, MYH10 and RHOA, at the cleavage furrow to advance furrow ingression during cytokinesis. In epithelial cells, required for the formation of microvilli and membrane ruffles on the apical pole. Along with EZR, required for normal macropinocytosis. In Mus musculus (Mouse), this protein is Pleckstrin homology domain-containing family G member 6 (Plekhg6).